A 48-amino-acid polypeptide reads, in one-letter code: Delta-ctenitoxin-Pn1b (48 aa).

5 cysteine pairs are disulfide-bonded: Cys1-Cys15, Cys8-Cys21, Cys12-Cys48, Cys14-Cys31, and Cys23-Cys29.

Belongs to the neurotoxin 03 (Tx2) family. 05 subfamily. Expressed by the venom gland.

It localises to the secreted. Functionally, insecticidal neurotoxin that reversibly inhibits the N-methyl-D-aspartate (NMDA)-subtype of ionotropic glutamate receptor (GRIN) and inhibits inactivation of insect sodium channels (Nav). Inhibits glutamate uptake in rat brain synaptosomes. In vivo, induces immediate excitatory effects when injected intrathoracically in houseflies and cockroaches. The chain is Delta-ctenitoxin-Pn1b from Phoneutria nigriventer (Brazilian armed spider).